The primary structure comprises 336 residues: Eukaryotic translation initiation factor 3 subunit I (336 aa).

WD repeat units lie at residues 8–47 (GHER…RLGT), 50–91 (GHLG…KVWE), 146–185 (CTES…QLEN), 190–229 (EFDH…ILKT), and 287–326 (GHFG…FDFM).

It belongs to the eIF-3 subunit I family. As to quaternary structure, component of the eukaryotic translation initiation factor 3 (eIF-3) complex.

It is found in the cytoplasm. Its function is as follows. Component of the eukaryotic translation initiation factor 3 (eIF-3) complex, which is involved in protein synthesis of a specialized repertoire of mRNAs and, together with other initiation factors, stimulates binding of mRNA and methionyl-tRNAi to the 40S ribosome. The eIF-3 complex specifically targets and initiates translation of a subset of mRNAs involved in cell proliferation. The polypeptide is Eukaryotic translation initiation factor 3 subunit I (tif34) (Emericella nidulans (strain FGSC A4 / ATCC 38163 / CBS 112.46 / NRRL 194 / M139) (Aspergillus nidulans)).